The primary structure comprises 331 residues: Probable cyclic nucleotide synthase IK1_05630 (331 aa).

It belongs to the CD-NTase family. D12 subfamily.

In terms of biological role, cyclic nucleotide synthase (second messenger synthase) of a CBASS antivirus system. CBASS (cyclic oligonucleotide-based antiphage signaling system) provides immunity against bacteriophage. The CD-NTase protein synthesizes cyclic nucleotides in response to infection; these serve as specific second messenger signals. The signals activate a diverse range of effectors, leading to bacterial cell death and thus abortive phage infection. A type I-B CBASS system. Its function is as follows. Probably a cyclic nucleotide synthase that makes second messenger nucleotide which activates a CBASS antiviral defense system. Protects B.subtilis against phage infection. When IK1_05630 and IK1_05631 are introduced in B.subtilis BEST7003 there is 1000-fold protection against phage SBSphiC. Both genes are required for protection. Activation leads to bacterial cell lysis and death, which occurs before the phage has finished its replication cycle, thus protecting non-infected bacteria by aborting the phage infection and preventing its propagation. This chain is Probable cyclic nucleotide synthase IK1_05630, found in Bacillus cereus (strain VD146).